The following is a 145-amino-acid chain: D-aminoacyl-tRNA deacylase (145 aa).

The Gly-cisPro motif, important for rejection of L-amino acids motif lies at 137 to 138 (GP).

Belongs to the DTD family. As to quaternary structure, homodimer.

It is found in the cytoplasm. It catalyses the reaction glycyl-tRNA(Ala) + H2O = tRNA(Ala) + glycine + H(+). The enzyme catalyses a D-aminoacyl-tRNA + H2O = a tRNA + a D-alpha-amino acid + H(+). Its function is as follows. An aminoacyl-tRNA editing enzyme that deacylates mischarged D-aminoacyl-tRNAs. Also deacylates mischarged glycyl-tRNA(Ala), protecting cells against glycine mischarging by AlaRS. Acts via tRNA-based rather than protein-based catalysis; rejects L-amino acids rather than detecting D-amino acids in the active site. By recycling D-aminoacyl-tRNA to D-amino acids and free tRNA molecules, this enzyme counteracts the toxicity associated with the formation of D-aminoacyl-tRNA entities in vivo and helps enforce protein L-homochirality. The polypeptide is D-aminoacyl-tRNA deacylase (Shewanella pealeana (strain ATCC 700345 / ANG-SQ1)).